The following is a 383-amino-acid chain: MDLCQKNETDLENGENNEIQSTEETEPTCTCPDGRSEKNHVCCLLDISDITLEQDVKAEEFIIGTGWEEAVQGWGRTSPAACIWPRKLPKKARVGEGACSDCLVCLNLAHRSLETKPPTEGGPEKDQSSPSQTQAAPQGPSTASRAISNICFPTYFRTEKKSLQIKEFIWCTEDWAISDSSRGKALRNPSGGAHRGLSIPGPLTSRALLVLPPLKASLSNALDVLGKKSKNSFLQSEEKVLSVEKDGCLACAYGLKTADGKGEKRPSELAKHTVVNDTPSSPSPAARTSLLTDPEQCCLHWSLLSEKNLACPSDSSNVRYLAALQLLQKRGVQNYKSKFQAKDPRPPVITQKAKQENSPQMLETKVFTRPLLPSLTHRKKKIK.

Disordered regions lie at residues 1–30, 114–144, 262–289, and 341–360; these read MDLC…PTCT, ETKP…STAS, GEKR…ARTS, and AKDP…NSPQ. Residues 10-26 are compositionally biased toward acidic residues; it reads DLENGENNEIQSTEETE. Positions 128-141 are enriched in low complexity; the sequence is SSPSQTQAAPQGPS. A compositionally biased stretch (basic and acidic residues) spans 262–271; the sequence is GEKRPSELAK.

This is an uncharacterized protein from Macaca fascicularis (Crab-eating macaque).